The following is a 335-amino-acid chain: Probable cytosolic iron-sulfur protein assembly protein Ciao1 (335 aa).

WD repeat units follow at residues 12–51 (GHKG…WSTK), 57–96 (GHKR…FECN), 101–140 (GHEN…EFEC), 146–185 (PHTQ…NDWD), 192–231 (SHTS…NTAG), 250–289 (QHSR…KPDE), and 301–335 (AHDQ…KVTE).

Belongs to the WD repeat CIA1 family. In terms of processing, conjugated to URM1, a ubiquitin-like protein.

In terms of biological role, essential component of the cytosolic iron-sulfur (Fe/S) protein assembly machinery. Required for the maturation of extramitochondrial Fe/S proteins. In Drosophila melanogaster (Fruit fly), this protein is Probable cytosolic iron-sulfur protein assembly protein Ciao1.